Consider the following 159-residue polypeptide: Transcription elongation factor GreA (159 aa).

A coiled-coil region spans residues 47–77; the sequence is SENAEYDAARDKQATIENEITEIQHILDNYE.

The protein belongs to the GreA/GreB family.

In terms of biological role, necessary for efficient RNA polymerase transcription elongation past template-encoded arresting sites. The arresting sites in DNA have the property of trapping a certain fraction of elongating RNA polymerases that pass through, resulting in locked ternary complexes. Cleavage of the nascent transcript by cleavage factors such as GreA or GreB allows the resumption of elongation from the new 3'terminus. GreA releases sequences of 2 to 3 nucleotides. In Metamycoplasma arthritidis (strain 158L3-1) (Mycoplasma arthritidis), this protein is Transcription elongation factor GreA.